Here is a 188-residue protein sequence, read N- to C-terminus: Probable RNA-binding protein 18 (188 aa).

Positions 23 to 104 (HRLWIGNIDP…KKLVVRWAHA (82 aa)) constitute an RRM domain. The segment at 151-188 (EENPDDYSGPSAYTYNKPPDKREKRSQPYHKHFRKHRR) is disordered. Basic residues predominate over residues 177–188 (QPYHKHFRKHRR).

This is Probable RNA-binding protein 18 (rbm18) from Danio rerio (Zebrafish).